The sequence spans 339 residues: Immunoglobulin-binding protein 1 (339 aa).

Alanine 2 is subject to N-acetylalanine. A UIM domain is found at 46–60 (LDLLEKAAEMLSQLD). Residues 98 to 202 (RLDHLQRARE…YLLHLQRWID (105 aa)) form an interaction with PPP2CA region. 2 disordered regions span residues 221–243 (RDSS…VKPF) and 289–339 (APEE…QNMG). The interval 225–290 (REASTSNSSR…PDQGIAKAAP (66 aa)) is interaction with MID1. The residue at position 241 (lysine 241) is an N6-acetyllysine. Positions 301-312 (EEQEEKEEEDDE) are enriched in acidic residues. Positions 313–329 (QTLHRAREWDDWKDTHP) are enriched in basic and acidic residues.

This sequence belongs to the IGBP1/TAP42 family. Interacts with partially folded PPP2CA, but not with the fully active protein. Interacts with PPP2CB, and with PP4 and PP6. Interacts with MID1 and MID2. Interacts with ubiquitin. In terms of processing, phosphorylated. Post-translationally, monoubiquitination by MID1 triggers calpain-mediated cleavage and switches IGBP1 activity from protective to destructive. Ubiquitously expressed with highest levels in heart, skeletal muscle and pancreas.

Its subcellular location is the cytoplasm. Functionally, associated to surface IgM-receptor; may be involved in signal transduction. Involved in regulation of the catalytic activity of the phosphatases PP2A, PP4 and PP6 by protecting their partially folded catalytic subunits from degradative polyubiquitination until they associate with regulatory subunits. This chain is Immunoglobulin-binding protein 1 (IGBP1), found in Homo sapiens (Human).